A 156-amino-acid chain; its full sequence is Small ribosomal subunit protein uS7 (156 aa).

This sequence belongs to the universal ribosomal protein uS7 family. In terms of assembly, part of the 30S ribosomal subunit. Contacts proteins S9 and S11.

In terms of biological role, one of the primary rRNA binding proteins, it binds directly to 16S rRNA where it nucleates assembly of the head domain of the 30S subunit. Is located at the subunit interface close to the decoding center, probably blocks exit of the E-site tRNA. The polypeptide is Small ribosomal subunit protein uS7 (Yersinia enterocolitica serotype O:8 / biotype 1B (strain NCTC 13174 / 8081)).